The sequence spans 672 residues: Transcription factor tau 91 kDa subunit (672 aa).

The tract at residues Met-1–Arg-158 is required for DNA-binding. Residues Ala-6 to Ala-18 constitute a DNA-binding region (a.T hook). Disordered stretches follow at residues Ser-24 to Lys-45 and Val-67 to Pro-156. Over residues Asp-71–Leu-100 the composition is skewed to acidic residues. A sufficient for interaction with TFC8 region spans residues Leu-159–Ser-672. Cys-375 and Cys-383 are disulfide-bonded.

Heterodimer with TFC8. Component of the TFIIIC complex composed of TFC1, TFC3, TFC4, TFC6, TFC7 and TFC8. The subunits are organized in two globular domains, tauA and tauB, connected by a proteolysis-sensitive and flexible linker. Interacts with TFC1, TFC3, TFC4 and directly with TFC8.

The protein resides in the nucleus. Its function is as follows. TFIIIC mediates tRNA and 5S RNA gene activation by binding to intragenic promoter elements. Upstream of the transcription start site, TFIIIC assembles the initiation complex TFIIIB-TFIIIC-tDNA, which is sufficient for RNA polymerase III recruitment and function. Part of the tauB domain of TFIIIC that binds boxB DNA promoter sites of tRNA and similar genes. Cooperates with TFC3 in DNA binding. This is Transcription factor tau 91 kDa subunit (TFC6) from Saccharomyces cerevisiae (strain ATCC 204508 / S288c) (Baker's yeast).